We begin with the raw amino-acid sequence, 354 residues long: Cellular communication network factor 6 (354 aa).

The first 23 residues, 1–23 (MQGLLFSTLLLAGLAQFCCRVQG), serve as a signal peptide directing secretion. One can recognise an IGFBP N-terminal domain in the interval 44-117 (RKQFCHWPCK…RYETGVCAYL (74 aa)). Cystine bridges form between Cys-48–Cys-72, Cys-52–Cys-74, Cys-54–Cys-75, Cys-61–Cys-78, Cys-86–Cys-100, and Cys-92–Cys-114. The N-linked (GlcNAc...) asparagine glycan is linked to Asn-178. Residues 208-253 (KCLVQATKWTPCSRTCGMGISNRVTNENSNCEMRKEKRLCYIQPCD) enclose the TSP type-1 domain. 5 cysteine pairs are disulfide-bonded: Cys-268/Cys-305, Cys-285/Cys-319, Cys-296/Cys-335, Cys-299/Cys-337, and Cys-304/Cys-341. Positions 268–342 (CQPTFQLSKA…TSCVCQRNCR (75 aa)) constitute a CTCK domain. A glycan (N-linked (GlcNAc...) asparagine) is linked at Asn-308.

The protein belongs to the CCN family. In terms of tissue distribution, predominant expression in adult kidney and testis and fetal kidney. Weaker expression found in placenta, ovary, prostate and small intestine. Also expressed in skeletally-derived cells such as synoviocytes and articular cartilage chondrocytes.

It localises to the secreted. The protein localises to the mitochondrion. Its function is as follows. Plays a role in mitochondrial electron transport and mitochondrial respiration. Through its regulation of the mitochondrial function may play a role in normal postnatal skeletal growth and cartilage homeostasis. The chain is Cellular communication network factor 6 from Homo sapiens (Human).